Reading from the N-terminus, the 758-residue chain is 5-methyltetrahydropteroyltriglutamate--homocysteine methyltransferase (758 aa).

5-methyltetrahydropteroyltri-L-glutamate-binding positions include 17–20 (RELK) and Lys110. L-homocysteine-binding positions include 428–430 (IGS) and Glu481. Residues 428–430 (IGS) and Glu481 each bind L-methionine. Residues 512–513 (RC) and Trp558 each bind 5-methyltetrahydropteroyltri-L-glutamate. Residue Asp596 participates in L-homocysteine binding. Asp596 contributes to the L-methionine binding site. Position 602 (Glu602) interacts with 5-methyltetrahydropteroyltri-L-glutamate. Zn(2+) contacts are provided by His638, Cys640, and Glu662. Residue His691 is the Proton donor of the active site. Residue Cys723 coordinates Zn(2+).

Belongs to the vitamin-B12 independent methionine synthase family. It depends on Zn(2+) as a cofactor.

The enzyme catalyses 5-methyltetrahydropteroyltri-L-glutamate + L-homocysteine = tetrahydropteroyltri-L-glutamate + L-methionine. It participates in amino-acid biosynthesis; L-methionine biosynthesis via de novo pathway; L-methionine from L-homocysteine (MetE route): step 1/1. In terms of biological role, catalyzes the transfer of a methyl group from 5-methyltetrahydrofolate to homocysteine resulting in methionine formation. This is 5-methyltetrahydropteroyltriglutamate--homocysteine methyltransferase from Thermosynechococcus vestitus (strain NIES-2133 / IAM M-273 / BP-1).